The primary structure comprises 640 residues: MSGQSLTDRITAAQHSVTGSAVSKTVCKATTHEIMGPKKKHLDYLIQCTNEMNVNIPQLADSLFERTTNSSWVVVFKSLITTHHLMVYGNERFIQYLASRNTLFNLSNFLDKSGLQGYDMSTFIRRYSRYLNEKAVSYRQVAFDFTKVKRGADGVMRTMNTEKLLKTVPIIQNQMDALLDFNVNSNELTNGVINAAFMLLFKDAIRLFAAYNEGIINLLEKYFDMKKNQCKEGLDIYKKFLTRMTRISEFLKVAEQVGIDRGDIPDLSQAPSSLLDALEQHLASLEGKKIKDSTAASRATTLSNAVSSLASTGLSLTKVDEREKQAALEEEQARLKALKEQRLKELAKKPHTSLTTAASPVSTSAGGIMTAPAIDIFSTPSSSNSTSKLPNDLLDLQQPTFHPSVHAMSAAPQVASTWGDAVDDAIPSLNPFLTKSSGDVHLPISSDVSTFTTRTPTHEMFVGFSPSPVTQPHPSAGLNVDFESVFGNKSTNVAVDSGGGLLKPTVASQNQSLPVAKLPPNKLVSDDLDSSLANLVGNLGIGNGTTKNDVSCSQPGEKKLTGGSNWQPKVAPTTAWSAATMAPPVMAYPATTPTGMIGYGIPPQMGSVPVMTQPTLIYSQPVMRPPNPFGPVPGAQIQFM.

Position 2 is an N-acetylserine (S2). An ENTH domain is found at 14–145; the sequence is QHSVTGSAVS…VSYRQVAFDF (132 aa). Residues S16 and S20 each carry the phosphoserine modification. Residues 221-294 form an interaction with PIMREG region; the sequence is KYFDMKKNQC…LEGKKIKDST (74 aa). A Glycyl lysine isopeptide (Lys-Gly) (interchain with G-Cter in SUMO2) cross-link involves residue K238. Phosphoserine occurs at positions 303 and 315. A disordered region spans residues 543 to 568; that stretch reads NGTTKNDVSCSQPGEKKLTGGSNWQP. A compositionally biased stretch (polar residues) spans 544 to 554; it reads GTTKNDVSCSQ.

This sequence belongs to the PICALM/SNAP91 family. As to quaternary structure, binds to clathrin; involves primarily the C-terminal sequences, but the full-length protein is required for full binding capacity. Binds phosphatidylinositol 4,5- bisphosphate. Interacts with PIMREG; this interaction may change the subcellular location into the nucleus. Interacts with AP2A1 (via its alpha-appendage domain). Interacts (via N-terminus) with VAMP2; VAMP3; VAMP7 and VAMP8 (Via N-terminus). Interacts with LC3/MAP1LC3A. As to expression, isoform 2 was found in most tissues examined. Isoform 1 has an overlapping expression pattern but is absent from lung, heart and pancreas. Both isoforms are widely expressed in the brain, higher levels are seen in hippocampus, dentate gyrus, medial habenula nucleus and cerebellar granule cells.

The protein localises to the cell membrane. Its subcellular location is the membrane. The protein resides in the clathrin-coated pit. It is found in the golgi apparatus. It localises to the cytoplasmic vesicle. The protein localises to the clathrin-coated vesicle. Its subcellular location is the nucleus. Functionally, cytoplasmic adapter protein that plays a critical role in clathrin-mediated endocytosis which is important in processes such as internalization of cell receptors, synaptic transmission or removal of apoptotic cells. Recruits AP-2 and attaches clathrin triskelions to the cytoplasmic side of plasma membrane leading to clathrin-coated vesicles (CCVs) assembly. Furthermore, regulates clathrin-coated vesicle size and maturation by directly sensing and driving membrane curvature. In addition to binding to clathrin, mediates the endocytosis of small R-SNARES (Soluble NSF Attachment Protein REceptors) between plasma membranes and endosomes including VAMP2, VAMP3, VAMP4, VAMP7 or VAMP8. In turn, PICALM-dependent SNARE endocytosis is required for the formation and maturation of autophagic precursors. Modulates thereby autophagy and the turnover of autophagy substrates such as MAPT/TAU or amyloid precursor protein cleaved C-terminal fragment (APP-CTF). The chain is Phosphatidylinositol-binding clathrin assembly protein (Picalm) from Rattus norvegicus (Rat).